The primary structure comprises 757 residues: Protein ALTERED SEED GERMINATION 2 (757 aa).

WD repeat units lie at residues phenylalanine 6–glutamate 43, glycine 48–serine 87, glycine 91–glutamate 132, cysteine 145–proline 185, lysine 213–serine 253, and arginine 277–glycine 316. Residues arginine 245–arginine 257 carry the Nuclear localization signal motif. One copy of the TPR repeat lies at phenylalanine 442–aspartate 475. The tract at residues alanine 519–tyrosine 601 is disordered. Over residues serine 523–arginine 532 the composition is skewed to basic and acidic residues. Over residues glutamate 533–leucine 543 the composition is skewed to acidic residues. Residues threonine 582 to tyrosine 601 are compositionally biased toward polar residues. WD repeat units lie at residues asparagine 618 to valine 658 and glycine 661 to valine 700. Cysteine 754 carries S-12-hydroxyfarnesyl cysteine; by FTB/ERA1 lipidation.

As to quaternary structure, interacts with DDB1; the subcellular localization of this complex depends on farnesylation status. Binds to HDA9 in the cytosol when farnesylated. Post-translationally, farnesylated at Cys-754 by FTB/ERA1; this modification triggers an exclusion from the nucleus.

The protein localises to the nucleus. Its subcellular location is the cytoplasm. It localises to the cytosol. The protein operates within protein modification; protein ubiquitination. May function as a substrate adapter for CUL4-DDB1 E3 ubiquitin-protein ligase complex. Negative regulator of fatty acid biosynthetic process and accumulation. Acts as an abscisic acid (ABA) negative regulator. Involved in responses to salt (NaCl) and osmotic (e.g. in response to mannitol and PEG) stresses. The polypeptide is Protein ALTERED SEED GERMINATION 2 (Arabidopsis thaliana (Mouse-ear cress)).